The following is a 377-amino-acid chain: Phospho-N-acetylmuramoyl-pentapeptide-transferase (377 aa).

10 helical membrane passes run 2–22 (IQLL…TPAL), 55–75 (VAIL…SVLA), 82–102 (ITLS…VGFL), 122–142 (MVLQ…FPDA), 162–182 (LAFA…NLIA), 195–215 (LDGL…LITL), 236–256 (PMDL…FLWW), 263–283 (IFMG…FAVL), 288–308 (LLLV…ILQV), and 343–363 (FWVI…GDWL).

Belongs to the glycosyltransferase 4 family. MraY subfamily. Requires Mg(2+) as cofactor.

It is found in the cell membrane. It catalyses the reaction UDP-N-acetyl-alpha-D-muramoyl-L-alanyl-gamma-D-glutamyl-meso-2,6-diaminopimeloyl-D-alanyl-D-alanine + di-trans,octa-cis-undecaprenyl phosphate = di-trans,octa-cis-undecaprenyl diphospho-N-acetyl-alpha-D-muramoyl-L-alanyl-D-glutamyl-meso-2,6-diaminopimeloyl-D-alanyl-D-alanine + UMP. It participates in cell wall biogenesis; peptidoglycan biosynthesis. Catalyzes the initial step of the lipid cycle reactions in the biosynthesis of the cell wall peptidoglycan: transfers peptidoglycan precursor phospho-MurNAc-pentapeptide from UDP-MurNAc-pentapeptide onto the lipid carrier undecaprenyl phosphate, yielding undecaprenyl-pyrophosphoryl-MurNAc-pentapeptide, known as lipid I. The protein is Phospho-N-acetylmuramoyl-pentapeptide-transferase of Kocuria rhizophila (strain ATCC 9341 / DSM 348 / NBRC 103217 / DC2201).